The sequence spans 217 residues: 3,4-dihydroxy-2-butanone 4-phosphate synthase (217 aa).

D-ribulose 5-phosphate-binding positions include 37-38 (RE), Asp42, 150-154 (RGGHT), and Glu174. Glu38 contacts Mg(2+). Residue His153 participates in Mg(2+) binding.

This sequence belongs to the DHBP synthase family. Homodimer. The cofactor is Mg(2+). Mn(2+) serves as cofactor.

It carries out the reaction D-ribulose 5-phosphate = (2S)-2-hydroxy-3-oxobutyl phosphate + formate + H(+). Its pathway is cofactor biosynthesis; riboflavin biosynthesis; 2-hydroxy-3-oxobutyl phosphate from D-ribulose 5-phosphate: step 1/1. Its function is as follows. Catalyzes the conversion of D-ribulose 5-phosphate to formate and 3,4-dihydroxy-2-butanone 4-phosphate. In Cronobacter sakazakii (strain ATCC BAA-894) (Enterobacter sakazakii), this protein is 3,4-dihydroxy-2-butanone 4-phosphate synthase.